Reading from the N-terminus, the 214-residue chain is Cytochrome b (214 aa).

4 consecutive transmembrane segments (helical) span residues 31-51 (FGSM…FLAI), 75-96 (WIMQ…YIHI), 111-131 (WLSG…GYVL), and 176-196 (FFAL…IHIL). Positions 81 and 95 each coordinate heme b. Residues histidine 180 and histidine 194 each coordinate heme b. Histidine 199 provides a ligand contact to a ubiquinone.

This sequence belongs to the cytochrome b family. The cytochrome bc1 complex contains 3 respiratory subunits (MT-CYB, CYC1 and UQCRFS1), 2 core proteins (UQCRC1 and UQCRC2) and probably 6 low-molecular weight proteins. Heme b serves as cofactor.

The protein resides in the mitochondrion inner membrane. Functionally, component of the ubiquinol-cytochrome c reductase complex (complex III or cytochrome b-c1 complex) that is part of the mitochondrial respiratory chain. The b-c1 complex mediates electron transfer from ubiquinol to cytochrome c. Contributes to the generation of a proton gradient across the mitochondrial membrane that is then used for ATP synthesis. The protein is Cytochrome b (MT-CYB) of Bothrops bilineatus (Green jararaca).